A 56-amino-acid polypeptide reads, in one-letter code: Ribosome modulation factor (56 aa).

It belongs to the ribosome modulation factor family.

It localises to the cytoplasm. In terms of biological role, during stationary phase, converts 70S ribosomes to an inactive dimeric form (100S ribosomes). In Serratia proteamaculans (strain 568), this protein is Ribosome modulation factor.